A 682-amino-acid chain; its full sequence is E3 ubiquitin ligase Rnf157 (682 aa).

Glycine 2 is lipidated: N-myristoyl glycine. The segment at 277 to 317 (CVVCLSDVRDTLILPCRHCASCNVHCADTLRYQANNCPICR) adopts an RING-type; degenerate zinc-finger fold. The D-box 1 signature appears at 330-333 (RKKL). Disordered stretches follow at residues 440 to 604 (QNSS…VQED) and 655 to 682 (NTQRRRLSPSSLEDPEEDRPCVWDPLAV). The segment covering 479-538 (ESENLTLSSSGAVDQSSCTGTPLSSTISSPEDPASSSLAQSVMSMASSQISTDTVSSMSG) has biased composition (polar residues). Over residues 585-597 (QDAEGNDIMEEED) the composition is skewed to acidic residues. Positions 658–661 (RRRL) match the D-box 2 motif. Serine 662, serine 664, and serine 665 each carry phosphoserine.

Interacts with APBB1. Interacts with CHD1; CHD1-binding controls RNF157 stability. Also interacts with ATRN, MEGF8, TECR, MSI2, PLRG1, BYSL, MTERF3, PSMA1, MRPS18B, PRPF4, FASTKD2, SLC25A1, SMU1, CNOT9, MRPS2, MAGT1, FXR2, EMD, PSMD8, HDAC1, RAN, HSD17B12, TXNDC5 and MRPL19. Predominantly expressed in the brain.

Its subcellular location is the cytoplasm. It catalyses the reaction S-ubiquitinyl-[E2 ubiquitin-conjugating enzyme]-L-cysteine + [acceptor protein]-L-lysine = [E2 ubiquitin-conjugating enzyme]-L-cysteine + N(6)-ubiquitinyl-[acceptor protein]-L-lysine.. Its function is as follows. E3 ubiquitin ligase that ubiquitinates APBB1 for its degradation by the proteasome and thus prevents apoptosis and promotes survival of neurons. Has a dual role in neurons as it is also required for dendrite growth and maintenance for which its ligase activity is not critical. May act as a scaffold molecule to regulate this process. Acts as a downstream effector of the interconnected PI3K and MAPK signaling pathways and thus participates in the regulation of the cell cycle. In Rattus norvegicus (Rat), this protein is E3 ubiquitin ligase Rnf157 (Rnf157).